Reading from the N-terminus, the 267-residue chain is Myxobacterial hemagglutinin (267 aa).

A run of 4 repeats spans residues 1-66, 67-133, 134-200, and 201-267. Residues 1 to 267 form a 4 X 65 AA tandem repeats region; sequence MAAYLVQNQW…GPIGFRARLG (267 aa).

This sequence belongs to the bacterial lectin family.

Functionally, this lectin might have a role in the differentiation of cells. This chain is Myxobacterial hemagglutinin (mbhA), found in Myxococcus xanthus.